Consider the following 213-residue polypeptide: Probable GTP-binding protein EngB (213 aa).

Residues 30–204 (EGFEVAFAGR…YTVLAGWMEL (175 aa)) form the EngB-type G domain. GTP-binding positions include 38 to 45 (GRSNAGKS), 64 to 68 (GRTQL), 82 to 85 (DLPG), 149 to 152 (TKAD), and 182 to 185 (LFSA). 2 residues coordinate Mg(2+): Ser-45 and Thr-66.

It belongs to the TRAFAC class TrmE-Era-EngA-EngB-Septin-like GTPase superfamily. EngB GTPase family. Mg(2+) serves as cofactor.

Functionally, necessary for normal cell division and for the maintenance of normal septation. This chain is Probable GTP-binding protein EngB, found in Pseudomonas fluorescens (strain ATCC BAA-477 / NRRL B-23932 / Pf-5).